Consider the following 139-residue polypeptide: Nucleoside diphosphate kinase (139 aa).

Residues lysine 11, phenylalanine 59, arginine 87, threonine 93, arginine 104, and asparagine 114 each contribute to the ATP site. Histidine 117 (pros-phosphohistidine intermediate) is an active-site residue.

This sequence belongs to the NDK family. As to quaternary structure, homotetramer. It depends on Mg(2+) as a cofactor.

It localises to the cytoplasm. The catalysed reaction is a 2'-deoxyribonucleoside 5'-diphosphate + ATP = a 2'-deoxyribonucleoside 5'-triphosphate + ADP. The enzyme catalyses a ribonucleoside 5'-diphosphate + ATP = a ribonucleoside 5'-triphosphate + ADP. In terms of biological role, major role in the synthesis of nucleoside triphosphates other than ATP. The ATP gamma phosphate is transferred to the NDP beta phosphate via a ping-pong mechanism, using a phosphorylated active-site intermediate. This Wolbachia sp. subsp. Drosophila simulans (strain wRi) protein is Nucleoside diphosphate kinase.